Reading from the N-terminus, the 487-residue chain is Putative KilA-N domain-containing protein L37 (487 aa).

The segment covering 1–12 has biased composition (basic residues); sequence MKVQKSSKKPLK. Residues 1-137 are disordered; the sequence is MKVQKSSKKP…DINSDDDNNL (137 aa). Positions 22 to 34 are enriched in low complexity; sequence KSGSKSMKSSKSS. Acidic residues-rich tracts occupy residues 47–77 and 111–136; these read DSEI…ESSD and VLDD…DDNN. In terms of domain architecture, KilA-N spans 175 to 284; that stretch reads EISKGIYGTF…HKVSKIVNDY (110 aa). Residues 290-338 are a coiled coil; sequence FDKHEQLIKGKDDKIAELTRKIDKQTSLMKDQKSTIKEQDKKINELLSK.

This is Putative KilA-N domain-containing protein L37 from Acanthamoeba polyphaga mimivirus (APMV).